A 670-amino-acid polypeptide reads, in one-letter code: Solute carrier organic anion transporter family member 1A1 (670 aa).

Topologically, residues 1–20 are cytoplasmic; the sequence is MEETEKKIATQEGRLFSKMK. The chain crosses the membrane as a helical span at residues 21-40; it reads VFLLSLTCACLTKSLSGVYM. The Extracellular portion of the chain corresponds to 41–59; the sequence is NSMLTQIERQFDISTSVAG. Residues 60–80 form a helical membrane-spanning segment; the sequence is LINGSFEIGNLFFIVFVSYFG. Over 81–86 the chain is Cytoplasmic; the sequence is TKLHRP. A helical transmembrane segment spans residues 87–111; sequence VVIGIGCVIMGLGCLLMSLPHFFMG. The Extracellular segment spans residues 112–155; it reads RYEYETTISPTGNLSSNSFLCMENRTQTLKPTQDPAECVKEMKS. Residues Asn-124 and Asn-135 are each glycosylated (N-linked (GlcNAc...) asparagine). The chain crosses the membrane as a helical span at residues 156–184; that stretch reads LMWICVMVGNIIRGIGETPIVPLGISYIE. Residues 185–203 are Cytoplasmic-facing; sequence DFAKSENSPLYIGILEMGK. A helical membrane pass occupies residues 204-224; that stretch reads VAGPIFGLLLGSYCAQIYVDI. The Extracellular portion of the chain corresponds to 225 to 242; the sequence is GSVNTDDLTITPSDTRWV. The chain crosses the membrane as a helical span at residues 243 to 267; sequence GAWWIGFLVCAGVNILTSIPFFFLP. Residues 268-311 lie on the Cytoplasmic side of the membrane; that stretch reads KALPKKGQQENVAVTKDGKVEKYGGQAREENLGITKDFLTFMKR. The chain crosses the membrane as a helical span at residues 312 to 333; the sequence is LFCNPIYMLFILTSVLQVNGFI. Topologically, residues 334–353 are extracellular; sequence NKFTFLPKYLEQQYGKSTAE. Residues 354–377 traverse the membrane as a helical segment; sequence AIFLIGVYSLPPICLGYLIGGFIM. At 378–381 the chain is on the cytoplasmic side; it reads KKFK. Residues 382 to 405 traverse the membrane as a helical segment; that stretch reads ITVKKAAYLAFCLSVFEYLLFLCH. Residues 406–513 lie on the Extracellular side of the membrane; that stretch reads FMLTCDNAAV…PECANRLQYF (108 aa). In terms of domain architecture, Kazal-like spans 433–488; it reads SKVLADCNTRCSCSTNTWDPVCGDNGVAYMSACLAGCKKFVGTGTNMVFQDCSCIQ. Intrachain disulfides connect Cys-439–Cys-469, Cys-445–Cys-465, and Cys-454–Cys-486. Residue Asn-492 is glycosylated (N-linked (GlcNAc...) asparagine). A helical transmembrane segment spans residues 514-536; sequence LILTIIISFIYSLTAIPGYMVFL. Residues 537–545 lie on the Cytoplasmic side of the membrane; the sequence is RCVKSEEKS. A helical membrane pass occupies residues 546-571; sequence LGVGLHTFCIRVFAGIPAPVYFGALI. The Extracellular segment spans residues 572 to 605; sequence DRTCLHWGTLKCGQRGACRMYDINSFRHIYLGLP. Residues 606–623 traverse the membrane as a helical segment; that stretch reads IALRGSSYLPAFFILILM. Over 624-670 the chain is Cytoplasmic; that stretch reads RKFQFPGDIDSSATDHTEMMLGEKESEHTDVHGSPQVENDGELKTKL. Residues Ser-634 and Ser-635 each carry the phosphoserine modification. Residues 645–654 are compositionally biased toward basic and acidic residues; the sequence is GEKESEHTDV. Positions 645-670 are disordered; sequence GEKESEHTDVHGSPQVENDGELKTKL.

The protein belongs to the organo anion transporter (TC 2.A.60) family. As to quaternary structure, binds to PDZK1. Interaction with PDZK1 is required for expression on hepatocyte surface. Post-translationally, glycosylated. In terms of tissue distribution, highly expressed in liver and kidney, and at lower levels in brain, lung, skeletal muscle and proximal colon.

The protein localises to the basolateral cell membrane. It catalyses the reaction estrone 3-sulfate(out) + hydrogencarbonate(in) = estrone 3-sulfate(in) + hydrogencarbonate(out). The catalysed reaction is taurocholate(out) + hydrogencarbonate(in) = taurocholate(in) + hydrogencarbonate(out). The enzyme catalyses L-thyroxine(out) = L-thyroxine(in). It carries out the reaction prostaglandin E2(out) = prostaglandin E2(in). It catalyses the reaction 17beta-estradiol 17-O-(beta-D-glucuronate)(out) = 17beta-estradiol 17-O-(beta-D-glucuronate)(in). The catalysed reaction is dehydroepiandrosterone 3-sulfate(out) = dehydroepiandrosterone 3-sulfate(in). Mediates the Na(+)-independent transport of organic anions such as steroid sulfate conjugates (dehydroepiandrosterone sulfate (DHEAS), 17-beta-glucuronosyl estradiol, estrone-3-sulfate), conjugated (taurocholate) and unconjugated (cholate) bile acids, prostaglandin E2 (PGE2) and L-thyroxine T4. Also capable of transporting sulfobromophthalein (BSP), ouabain and gadoxetate. Hydrogencarbonate/HCO3(-) acts as the probable counteranion that exchanges for organic anions. Shows a pH-sensitive substrate specificity which may be ascribed to the protonation state of the binding site and leads to a stimulation of substrate transport in an acidic microenvironment. In Rattus norvegicus (Rat), this protein is Solute carrier organic anion transporter family member 1A1.